The sequence spans 615 residues: Semenogelin-1 (615 aa).

An N-terminal signal peptide occupies residues 1-23 (MKPIIFLVLSLLLILEKQAAVMG). Glutamine 24 carries the pyrrolidone carboxylic acid modification. Disordered stretches follow at residues 24–118 (QKGG…EHGK), 133–160 (GHAP…SQDS), and 172–585 (GKEQ…HRSY). A compositionally biased stretch (polar residues) spans 34 to 46 (SESSQFPHGQKGQ). Basic and acidic residues predominate over residues 50 to 80 (ARKDKQHAESKRSVSIEHTYHVDIPDHDQTR). Residues 81–91 (TSKQYDLNAQN) show a composition bias toward polar residues. A compositionally biased stretch (basic and acidic residues) spans 107 to 118 (FNHKQEGREHGK). Polar residues-rich tracts occupy residues 138–160 (GTQN…SQDS), 177–196 (SVSG…SPVL), and 209–224 (TQNS…NVNE). 3 N-linked (GlcNAc...) asparagine glycosylation sites follow: asparagine 148, asparagine 184, and asparagine 223. Over residues 241–253 (QEDRLQHGSKDVF) the composition is skewed to basic and acidic residues. Residues 254–265 (SKNQNQTRNPNQ) are compositionally biased toward polar residues. 2 N-linked (GlcNAc...) asparagine glycosylation sites follow: asparagine 258 and asparagine 275. Residues 283–300 (TEERRPNHGEKGIQKDAS) show a composition bias toward basic and acidic residues. An N-linked (GlcNAc...) asparagine glycan is attached at asparagine 306. Basic and acidic residues predominate over residues 308 to 317 (TEDKMHDKSQ). Asparagine 332 carries an N-linked (GlcNAc...) asparagine glycan. The span at 341–358 (TEERRPNHGEKGIQKDAS) shows a compositional bias: basic and acidic residues. A glycan (N-linked (GlcNAc...) asparagine) is linked at asparagine 364. The segment covering 366-375 (TEDKMHDKSQ) has biased composition (basic and acidic residues). A glycan (N-linked (GlcNAc...) asparagine) is linked at asparagine 390. Over residues 399 to 416 (TEERRPNHGEKGIQKDAS) the composition is skewed to basic and acidic residues. Asparagine 422 is a glycosylation site (N-linked (GlcNAc...) asparagine). A compositionally biased stretch (basic and acidic residues) spans 424–433 (TEDKMHDKSQ). Residue asparagine 448 is glycosylated (N-linked (GlcNAc...) asparagine). Over residues 457 to 474 (TEERRPNHGEKGIQKDAS) the composition is skewed to basic and acidic residues. Asparagine 480 carries N-linked (GlcNAc...) asparagine glycosylation. Residues 481–491 (KTEDKMHDKSQ) show a composition bias toward basic and acidic residues. An N-linked (GlcNAc...) asparagine glycan is attached at asparagine 506. Residues 515–532 (TEERRPNHGEKGIQKDAS) are compositionally biased toward basic and acidic residues. Asparagine 538 carries N-linked (GlcNAc...) asparagine glycosylation. Residues 539-549 (KTEDEKHDKSQ) are compositionally biased toward basic and acidic residues. Over residues 550–563 (KQVTTPSQDQQSGQ) the composition is skewed to polar residues.

It belongs to the semenogelin family. Occurs in disulfide-linked complexes. In terms of processing, transglutaminase substrate. Rapidly cleaved after ejaculation by KLK3/PSA, resulting in liquefaction of the semen coagulum and the progressive release of motile spermatozoa.

The protein localises to the secreted. Its function is as follows. Predominant protein in semen. It participates in the formation of a gel matrix entrapping the accessory gland secretions and ejaculated spermatozoa. Fragments of semenogelin and/or fragments of the related proteins may contribute to the activation of progressive sperm movements as the gel-forming proteins are fragmented by KLK3/PSA. The sequence is that of Semenogelin-1 (SEMG1) from Saguinus oedipus (Cotton-top tamarin).